We begin with the raw amino-acid sequence, 210 residues long: Peptidyl-tRNA hydrolase (210 aa).

TRNA is bound at residue tyrosine 14. Histidine 19 serves as the catalytic Proton acceptor. 3 residues coordinate tRNA: phenylalanine 64, asparagine 66, and asparagine 112.

The protein belongs to the PTH family. As to quaternary structure, monomer.

The protein resides in the cytoplasm. The catalysed reaction is an N-acyl-L-alpha-aminoacyl-tRNA + H2O = an N-acyl-L-amino acid + a tRNA + H(+). Its function is as follows. Hydrolyzes ribosome-free peptidyl-tRNAs (with 1 or more amino acids incorporated), which drop off the ribosome during protein synthesis, or as a result of ribosome stalling. In terms of biological role, catalyzes the release of premature peptidyl moieties from peptidyl-tRNA molecules trapped in stalled 50S ribosomal subunits, and thus maintains levels of free tRNAs and 50S ribosomes. The protein is Peptidyl-tRNA hydrolase of Methylorubrum populi (strain ATCC BAA-705 / NCIMB 13946 / BJ001) (Methylobacterium populi).